The following is a 128-amino-acid chain: MTTARALSDGLAYLLACFNAFCIQAHLTSRFSPAFSKNLATQLPHHNKAIFWWLGVSDETLRYMFVSLNAGLGLLLALPGWRSTGLKVALALLCVGFTSDMKLKEKWLLHFLSHLVLLSITMAAIYVR.

An N-terminal signal peptide occupies residues 1–36 (MTTARALSDGLAYLLACFNAFCIQAHLTSRFSPAFS). The next 2 membrane-spanning stretches (helical) occupy residues 61–81 (LRYM…LPGW) and 107–127 (WLLH…AIYV).

Belongs to the cyclic ether formation enzyme xenC family.

It localises to the membrane. The protein operates within mycotoxin biosynthesis. Its function is as follows. Cyclic ether formation enzyme; part of the gene cluster that mediates the biosynthesis of GKK1032, fungal natural products containing a macrocyclic para-cyclophane connected to a decahydrofluorene ring system that show potent antitumor activities. Within the pathway, gkaZ functions synergistically with gkaB and gkaX to form the cyclophane. The pathway begins with the PKS-NRPS gkaA which, with the help of the trans-enoyl reductase gkaC, synthesizes the polyketide-tyrosyl acyl thioester product which can be reductively off-loaded by the terminal reductase (R) domain in gkaA. The alpha/beta hydrolase gkaG is then required to catalyze the subsequent Knoevenagel condensation that affords the 3-pyrrolin-2-one ring, whereas the three proteins gkaB, gkaX and gkaZ then function synergistically to form the cyclophane. In Penicillium citrinum, this protein is Cyclic ether formation enzyme gkaZ.